The chain runs to 328 residues: 4-hydroxythreonine-4-phosphate dehydrogenase (328 aa).

Residues histidine 134 and threonine 135 each contribute to the substrate site. 3 residues coordinate a divalent metal cation: histidine 164, histidine 209, and histidine 264. 3 residues coordinate substrate: lysine 272, asparagine 281, and arginine 290.

It belongs to the PdxA family. In terms of assembly, homodimer. Zn(2+) serves as cofactor. Requires Mg(2+) as cofactor. It depends on Co(2+) as a cofactor.

Its subcellular location is the cytoplasm. The catalysed reaction is 4-(phosphooxy)-L-threonine + NAD(+) = 3-amino-2-oxopropyl phosphate + CO2 + NADH. The protein operates within cofactor biosynthesis; pyridoxine 5'-phosphate biosynthesis; pyridoxine 5'-phosphate from D-erythrose 4-phosphate: step 4/5. In terms of biological role, catalyzes the NAD(P)-dependent oxidation of 4-(phosphooxy)-L-threonine (HTP) into 2-amino-3-oxo-4-(phosphooxy)butyric acid which spontaneously decarboxylates to form 3-amino-2-oxopropyl phosphate (AHAP). This chain is 4-hydroxythreonine-4-phosphate dehydrogenase, found in Shewanella denitrificans (strain OS217 / ATCC BAA-1090 / DSM 15013).